We begin with the raw amino-acid sequence, 642 residues long: Threonine--tRNA ligase (642 aa).

The TGS domain maps to 1–61; that stretch reads MPIITLPDGS…SEDANLEIIT (61 aa). The tract at residues 243–534 is catalytic; it reads DHRKIGKALN…ITEEYAGFFP (292 aa). Zn(2+) is bound by residues C334, H385, and H511.

This sequence belongs to the class-II aminoacyl-tRNA synthetase family. In terms of assembly, homodimer. It depends on Zn(2+) as a cofactor.

The protein resides in the cytoplasm. The enzyme catalyses tRNA(Thr) + L-threonine + ATP = L-threonyl-tRNA(Thr) + AMP + diphosphate + H(+). Functionally, catalyzes the attachment of threonine to tRNA(Thr) in a two-step reaction: L-threonine is first activated by ATP to form Thr-AMP and then transferred to the acceptor end of tRNA(Thr). Also edits incorrectly charged L-seryl-tRNA(Thr). The sequence is that of Threonine--tRNA ligase from Histophilus somni (strain 2336) (Haemophilus somnus).